The following is a 454-amino-acid chain: MMKTLSPTVITLPWRPDAAEHYFAPVNHLPWAMLLHSGDAIHPYNRFDILVADPVTTLTTRAQETTVCTARTTTVTLDDPLHVLQTQLEALPFHPQPDPDLPFQGGALGLFGYDLGRRFEILPDTAARDIALPDMAIGLYDWALIVDHQKQVVSLISYHDADARYRWLTSQRAPTRTPFRLTSAWQSNMTRCEYGEKFRQVQAWLHSGDCYQVNLSQRFQASYEGDEWQAFERLNRANRAPFSAFLRLHDGAILSLSPERFIQLENGHIQTRPIKGTLPRLNDPQADRQQAQKLANSMKDRAENLMIVDLMRNDIGRVAVPGSVKVPELFVVEPFPAVHHLVSTITARLPDSLHATDLLRAAFPGGSITGAPKVRAMEIIDELEPQRRNAWCGSIGYLSFCGKMDTSITIRTVTATQGQLYCSAGGGIVADSNEEAEYQETFDKVNRILHPLEN.

L-tryptophan is bound by residues serine 37, 44–47, and 241–243; these read YNRF and PFS. Glutamate 259 serves as the catalytic Proton donor. Lysine 275 functions as the N6-(4-deoxychorismate)-lysine intermediate in the catalytic mechanism.

It belongs to the anthranilate synthase component I family. As to quaternary structure, monomer. Heterodimer consisting of two non-identical subunits: a glutamine amidotransferase subunit (PabA) and a aminodeoxychorismate synthase subunit (PabB). The cofactor is Mg(2+).

The enzyme catalyses chorismate + L-glutamine = 4-amino-4-deoxychorismate + L-glutamate. The protein operates within cofactor biosynthesis; tetrahydrofolate biosynthesis; 4-aminobenzoate from chorismate: step 1/2. Functionally, part of a heterodimeric complex that catalyzes the two-step biosynthesis of 4-amino-4-deoxychorismate (ADC), a precursor of p-aminobenzoate (PABA) and tetrahydrofolate. In the first step, a glutamine amidotransferase (PabA) generates ammonia as a substrate that, along with chorismate, is used in the second step, catalyzed by aminodeoxychorismate synthase (PabB) to produce ADC. The polypeptide is Aminodeoxychorismate synthase component 1 (pabB) (Salmonella typhimurium (strain LT2 / SGSC1412 / ATCC 700720)).